The sequence spans 333 residues: Chlorophyllide reductase 35.5 kDa chain (333 aa).

A disordered region spans residues 1–22 (MTDAPNLKGFDARLREEAAEEP). ATP is bound by residues 45–50 (GSGKSF) and Lys-74. Ser-49 contacts Mg(2+). Positions 130 and 165 each coordinate [4Fe-4S] cluster. ATP is bound at residue 219–220 (NK).

This sequence belongs to the NifH/BchL/ChlL family. As to quaternary structure, homodimer. Chlorophyllide reductase is composed of three subunits; BchX, BchY and BchZ. [4Fe-4S] cluster serves as cofactor.

It catalyses the reaction 3-deacetyl-3-vinylbacteriochlorophyllide a + 2 oxidized [2Fe-2S]-[ferredoxin] + ADP + phosphate = chlorophyllide a + 2 reduced [2Fe-2S]-[ferredoxin] + ATP + H2O + H(+). The enzyme catalyses bacteriochlorophyllide a + 2 oxidized [2Fe-2S]-[ferredoxin] + ADP + phosphate = 3-acetyl-3-devinylchlorophyllide a + 2 reduced [2Fe-2S]-[ferredoxin] + ATP + H2O + H(+). The catalysed reaction is 3-deacetyl-3-(1-hydroxyethyl)bacteriochlorophyllide a + 2 oxidized [2Fe-2S]-[ferredoxin] + ADP + phosphate = 3-devinyl-3-(1-hydroxyethyl)chlorophyllide a + 2 reduced [2Fe-2S]-[ferredoxin] + ATP + H2O + H(+). Its pathway is porphyrin-containing compound metabolism; bacteriochlorophyll biosynthesis. Functionally, converts chlorophylls (Chl) into bacteriochlorophylls (BChl) by reducing ring B of the tetrapyrrole. This is Chlorophyllide reductase 35.5 kDa chain (bchX) from Rhodobacter capsulatus (strain ATCC BAA-309 / NBRC 16581 / SB1003).